The primary structure comprises 320 residues: ATP-dependent 6-phosphofructokinase (320 aa).

G11 contacts ATP. 21–25 (RAVTK) is a binding site for ADP. ATP-binding positions include 72 to 73 (RF) and 102 to 105 (GDGS). D103 contacts Mg(2+). A substrate-binding site is contributed by 125–127 (TID). D127 functions as the Proton acceptor in the catalytic mechanism. R154 lines the ADP pocket. Residues R162 and 169-171 (MGR) each bind substrate. ADP-binding positions include 185-187 (GAD) and 213-215 (KDH). Residues E222, R243, and 249 to 252 (HMQR) each bind substrate.

This sequence belongs to the phosphofructokinase type A (PFKA) family. ATP-dependent PFK group I subfamily. Prokaryotic clade 'B1' sub-subfamily. In terms of assembly, homotetramer. Mg(2+) is required as a cofactor.

Its subcellular location is the cytoplasm. The enzyme catalyses beta-D-fructose 6-phosphate + ATP = beta-D-fructose 1,6-bisphosphate + ADP + H(+). The protein operates within carbohydrate degradation; glycolysis; D-glyceraldehyde 3-phosphate and glycerone phosphate from D-glucose: step 3/4. Allosterically activated by ADP and other diphosphonucleosides, and allosterically inhibited by phosphoenolpyruvate. Catalyzes the phosphorylation of D-fructose 6-phosphate to fructose 1,6-bisphosphate by ATP, the first committing step of glycolysis. In Lactobacillus helveticus (strain DPC 4571), this protein is ATP-dependent 6-phosphofructokinase.